Here is a 341-residue protein sequence, read N- to C-terminus: Heme A synthase (341 aa).

Helical transmembrane passes span 7–27, 92–112, 118–138, 159–179, 190–210, 253–273, 280–300, and 302–322; these read VTVWLGVCCSMTLLMVVIGGI, LFGRALGAVFCLPIPYFAITK, MVAKLLMVALLGGMQGAMGWF, LFLTILLFSILWHSFLRCAGV, FFTAAAVVGLTVLQMVLGALV, FLHRLVAVLIVVCAAPLPFWL, LFLACVALQFLLGVATLVSVV, and IFLAAMHQVFGFVTLAAGVHM. Residue His-255 participates in heme binding. Heme is bound at residue His-308.

This sequence belongs to the COX15/CtaA family. Type 2 subfamily. Interacts with CtaB. Requires heme b as cofactor.

It is found in the cell membrane. The catalysed reaction is Fe(II)-heme o + 2 A + H2O = Fe(II)-heme a + 2 AH2. It participates in porphyrin-containing compound metabolism; heme A biosynthesis; heme A from heme O: step 1/1. Catalyzes the conversion of heme O to heme A by two successive hydroxylations of the methyl group at C8. The first hydroxylation forms heme I, the second hydroxylation results in an unstable dihydroxymethyl group, which spontaneously dehydrates, resulting in the formyl group of heme A. This chain is Heme A synthase, found in Anaplasma marginale (strain Florida).